Reading from the N-terminus, the 122-residue chain is Large ribosomal subunit protein uL14 (122 aa).

This sequence belongs to the universal ribosomal protein uL14 family. In terms of assembly, part of the 50S ribosomal subunit. Forms a cluster with proteins L3 and L19. In the 70S ribosome, L14 and L19 interact and together make contacts with the 16S rRNA in bridges B5 and B8.

Binds to 23S rRNA. Forms part of two intersubunit bridges in the 70S ribosome. The protein is Large ribosomal subunit protein uL14 of Bacillus licheniformis (strain ATCC 14580 / DSM 13 / JCM 2505 / CCUG 7422 / NBRC 12200 / NCIMB 9375 / NCTC 10341 / NRRL NRS-1264 / Gibson 46).